The chain runs to 493 residues: UDP-N-acetylmuramoyl-L-alanyl-D-glutamate--L-lysine ligase (493 aa).

Serine 30 contacts UDP-N-acetyl-alpha-D-muramoyl-L-alanyl-D-glutamate. 110–116 (GTNGKTS) contacts ATP. Residues asparagine 151, 152–153 (TT), serine 179, and arginine 187 contribute to the UDP-N-acetyl-alpha-D-muramoyl-L-alanyl-D-glutamate site. Lysine 219 is modified (N6-carboxylysine). An L-lysine recognition motif motif is present at residues 406–409 (DNPA).

It belongs to the MurCDEF family. MurE subfamily. Mg(2+) is required as a cofactor. Carboxylation is probably crucial for Mg(2+) binding and, consequently, for the gamma-phosphate positioning of ATP.

It is found in the cytoplasm. The catalysed reaction is UDP-N-acetyl-alpha-D-muramoyl-L-alanyl-D-glutamate + L-lysine + ATP = UDP-N-acetyl-alpha-D-muramoyl-L-alanyl-gamma-D-glutamyl-L-lysine + ADP + phosphate + H(+). It functions in the pathway cell wall biogenesis; peptidoglycan biosynthesis. Its function is as follows. Catalyzes the addition of L-lysine to the nucleotide precursor UDP-N-acetylmuramoyl-L-alanyl-D-glutamate (UMAG) in the biosynthesis of bacterial cell-wall peptidoglycan. Cannot use diaminopimelate as substrate. Can accept L-ornithine as substrate, but the efficiency is 400-fold lower than that with L-lysine. Seems to have a role in beta-lactam antibiotic resistance. The protein is UDP-N-acetylmuramoyl-L-alanyl-D-glutamate--L-lysine ligase of Staphylococcus aureus (strain NCTC 8325 / PS 47).